The primary structure comprises 161 residues: MTKKMNVESFNLDHTIVDAPFVRLAGIKEGINGDVIHKYDIRFKQPNKEHMEMPALHSLEHLMAENIRNHTDKVVDISPMGCQTGFYVSLINHDNYEDVLAILEKTLNDVLAADEVPACNEVQCGWAASHSLEGAKAIAQEMLSKKDSWHVIYQPGKEPQA.

Histidine 57, histidine 61, and cysteine 124 together coordinate Fe cation.

The protein belongs to the LuxS family. Homodimer. It depends on Fe cation as a cofactor.

It catalyses the reaction S-(5-deoxy-D-ribos-5-yl)-L-homocysteine = (S)-4,5-dihydroxypentane-2,3-dione + L-homocysteine. Involved in the synthesis of autoinducer 2 (AI-2) which is secreted by bacteria and is used to communicate both the cell density and the metabolic potential of the environment. The regulation of gene expression in response to changes in cell density is called quorum sensing. Catalyzes the transformation of S-ribosylhomocysteine (RHC) to homocysteine (HC) and 4,5-dihydroxy-2,3-pentadione (DPD). The polypeptide is S-ribosylhomocysteine lyase (Macrococcus caseolyticus (strain JCSC5402) (Macrococcoides caseolyticum)).